The following is a 55-amino-acid chain: Large ribosomal subunit protein bL33 (55 aa).

This sequence belongs to the bacterial ribosomal protein bL33 family.

This is Large ribosomal subunit protein bL33 from Rhodopseudomonas palustris (strain BisB5).